A 170-amino-acid polypeptide reads, in one-letter code: Lipoprotein signal peptidase (170 aa).

4 consecutive transmembrane segments (helical) span residues 11–31 (LSWL…KFYF), 41–61 (IVVI…AAFS), 69–89 (WQRW…VVWL), and 95–115 (NETW…GNLY). Catalysis depends on residues Asp-125 and Asp-144. Residues 136–156 (YFPAFNFADSAITVGAVMLAL) form a helical membrane-spanning segment.

The protein belongs to the peptidase A8 family.

It is found in the cell inner membrane. The enzyme catalyses Release of signal peptides from bacterial membrane prolipoproteins. Hydrolyzes -Xaa-Yaa-Zaa-|-(S,diacylglyceryl)Cys-, in which Xaa is hydrophobic (preferably Leu), and Yaa (Ala or Ser) and Zaa (Gly or Ala) have small, neutral side chains.. The protein operates within protein modification; lipoprotein biosynthesis (signal peptide cleavage). Its function is as follows. This protein specifically catalyzes the removal of signal peptides from prolipoproteins. The polypeptide is Lipoprotein signal peptidase (Pseudomonas fluorescens (strain Pf0-1)).